The following is a 118-amino-acid chain: Vitelline coat lysin (118 aa).

This chain is Vitelline coat lysin, found in Tegula pfeifferi (Pfeiffer's top shell).